The sequence spans 304 residues: Ribonuclease Z (304 aa).

Residues His-63, His-65, Asp-67, His-68, His-143, Asp-213, and His-271 each coordinate Zn(2+). The active-site Proton acceptor is the Asp-67.

It belongs to the RNase Z family. As to quaternary structure, homodimer. Zn(2+) is required as a cofactor.

The catalysed reaction is Endonucleolytic cleavage of RNA, removing extra 3' nucleotides from tRNA precursor, generating 3' termini of tRNAs. A 3'-hydroxy group is left at the tRNA terminus and a 5'-phosphoryl group is left at the trailer molecule.. Zinc phosphodiesterase, which displays some tRNA 3'-processing endonuclease activity. Probably involved in tRNA maturation, by removing a 3'-trailer from precursor tRNA. The chain is Ribonuclease Z from Parabacteroides distasonis (strain ATCC 8503 / DSM 20701 / CIP 104284 / JCM 5825 / NCTC 11152).